The primary structure comprises 529 residues: L-ornithine N(5)-monooxygenase (529 aa).

FAD contacts are provided by residues 100–108 (EKQPQFAWH) and Gln-119. Lys-124 is a binding site for substrate. Val-185 contributes to the FAD binding site. 270–273 (NGQS) lines the NADP(+) pocket. Residues 309–312 (NEIF) and Asn-339 contribute to the substrate site. Residue 339–341 (NYG) participates in NADP(+) binding. 493–495 (TLL) serves as a coordination point for FAD. Ser-496 contributes to the substrate binding site.

The protein belongs to the lysine N(6)-hydroxylase/L-ornithine N(5)-oxygenase family. In terms of assembly, homotetramer. FAD is required as a cofactor.

The catalysed reaction is L-ornithine + NADPH + O2 = N(5)-hydroxy-L-ornithine + NADP(+) + H2O. It carries out the reaction L-ornithine + NADH + O2 = N(5)-hydroxy-L-ornithine + NAD(+) + H2O. It functions in the pathway siderophore biosynthesis. In terms of biological role, L-ornithine N(5)-monooxygenase; part of the gene cluster that mediates the biosynthesis of hydroxamate-containing siderophores that play a critical role in virulence. Cochliobolus heterostrophus produces extracellular coprogen-type siderophores including coprogen, neocoprogen I and neocoprogen II, as well as the intracellular siderophore ferricrocin. The role of extracellular siderophores is to supply iron to their producers in planta and the intracellular ferricrocin is required for intracellular iron distribution and storage with a crucial role in ascus and ascospore development. SIDA2 catalyzes the conversion of L-ornithine to N(5)-hydroxyornithine, the first step in the biosynthesis of all hydroxamate-containing siderophores. The assembly of extracellular coprogen-type siderophores is then performed by the nonribosomal peptide synthetase (NRPS) NPS6 whereas the intracellular siderophore ferricrocin is assembled by NPS2. The sequence is that of L-ornithine N(5)-monooxygenase from Cochliobolus heterostrophus (strain C4 / ATCC 48331 / race T) (Southern corn leaf blight fungus).